We begin with the raw amino-acid sequence, 301 residues long: Protein ARMCX6 (301 aa).

Residues 1-6 (MGRARE) are mitochondrion outer membrane (MOM)-targeting sequence. Residues 1–7 (MGRAREM) are Mitochondrial intermembrane-facing. The helical; Signal-anchor transmembrane segment at 8–25 (GWMAAGLMIGAGACYCMY) threads the bilayer. A mitochondrion outer membrane (MOM)-targeting sequence region spans residues 26-36 (KLTMGRDEGNE). Residues 26–301 (KLTMGRDEGN…REMLVEAISP (276 aa)) lie on the Cytoplasmic side of the membrane. The disordered stretch occupies residues 70 to 105 (SEDGEWDEPGAPGGTEDRRSGGGKANRAHPTKQRPF).

The protein belongs to the eutherian X-chromosome-specific Armcx family.

Its subcellular location is the mitochondrion. It is found in the mitochondrion outer membrane. Functionally, may regulate the dynamics and distribution of mitochondria in neural cells. This is Protein ARMCX6 (Armcx6) from Rattus norvegicus (Rat).